The chain runs to 243 residues: Uridylate kinase (243 aa).

18 to 21 contacts ATP; the sequence is KLGG. UMP is bound at residue Gly-59. 2 residues coordinate ATP: Gly-60 and Arg-64. UMP is bound by residues Asp-79 and 140–147; that span reads MGMPYFST. The ATP site is built by Tyr-173 and Asp-176.

This sequence belongs to the UMP kinase family. In terms of assembly, homohexamer.

Its subcellular location is the cytoplasm. The enzyme catalyses UMP + ATP = UDP + ADP. The protein operates within pyrimidine metabolism; CTP biosynthesis via de novo pathway; UDP from UMP (UMPK route): step 1/1. Its activity is regulated as follows. Inhibited by UTP. Its function is as follows. Catalyzes the reversible phosphorylation of UMP to UDP. The chain is Uridylate kinase from Corynebacterium diphtheriae (strain ATCC 700971 / NCTC 13129 / Biotype gravis).